A 189-amino-acid chain; its full sequence is Probable hydrogen peroxide-inducible genes activator (189 aa).

The 58-residue stretch at 8–65 (PTLAGLRAFAAVAEKQHFGSAASALGVNQSTLSQALAGLESGLGVRLIERSTRRVFLT) folds into the HTH lysR-type domain. Residues 25–44 (FGSAASALGVNQSTLSQALA) constitute a DNA-binding region (H-T-H motif).

This sequence belongs to the LysR transcriptional regulatory family.

Functionally, required for the induction the katG gene for catalase. Involved in the response to hydrogen peroxide. The polypeptide is Probable hydrogen peroxide-inducible genes activator (oxyR) (Mycobacterium xenopi).